The sequence spans 172 residues: Large ribosomal subunit protein uL10 (172 aa).

This sequence belongs to the universal ribosomal protein uL10 family. In terms of assembly, part of the ribosomal stalk of the 50S ribosomal subunit. The N-terminus interacts with L11 and the large rRNA to form the base of the stalk. The C-terminus forms an elongated spine to which L12 dimers bind in a sequential fashion forming a multimeric L10(L12)X complex.

Its function is as follows. Forms part of the ribosomal stalk, playing a central role in the interaction of the ribosome with GTP-bound translation factors. This is Large ribosomal subunit protein uL10 from Rhizobium etli (strain ATCC 51251 / DSM 11541 / JCM 21823 / NBRC 15573 / CFN 42).